The sequence spans 175 residues: MSTKKKSIIKCIDWRSIEEPDLPLEVAGWLMEAGSMTERFERHCHKIIIDLKHEGFIEHQALSDEKELLPESPRYWIREVVMCADDEPWLLGRTVIPQDTLSGPEHALLNLGKTPLGRYLFSSKDLKRDYIQTGRQGDLWARRSLLQLSNKPLLLTEVFLPASPLYCHSRNTKLA.

Substrate contacts are provided by methionine 36, arginine 78, leucine 116, and glutamate 157.

It belongs to the UbiC family. As to quaternary structure, monomer.

Its subcellular location is the cytoplasm. The catalysed reaction is chorismate = 4-hydroxybenzoate + pyruvate. It functions in the pathway cofactor biosynthesis; ubiquinone biosynthesis. Its function is as follows. Removes the pyruvyl group from chorismate, with concomitant aromatization of the ring, to provide 4-hydroxybenzoate (4HB) for the ubiquinone pathway. The polypeptide is Chorismate pyruvate-lyase (Hamiltonella defensa subsp. Acyrthosiphon pisum (strain 5AT)).